A 171-amino-acid chain; its full sequence is MEDLKLTIRDIPDFPKKGIIFKDITTLLQDAKSFTRMIDMIANRYIGQRIDKVVGVEARGFLIGAALAYRLGAGVVLVRKPGKLPSETFSKTYDLEYGTDTLEIHKDAIKPGEKILIADDLLATGGTMAAVVDMVTNMQGEIVECCFMTELTFLDGRKKLPEGKVYSLMQF.

Belongs to the purine/pyrimidine phosphoribosyltransferase family. Homodimer.

The protein resides in the cytoplasm. The enzyme catalyses AMP + diphosphate = 5-phospho-alpha-D-ribose 1-diphosphate + adenine. It functions in the pathway purine metabolism; AMP biosynthesis via salvage pathway; AMP from adenine: step 1/1. Catalyzes a salvage reaction resulting in the formation of AMP, that is energically less costly than de novo synthesis. In Trichlorobacter lovleyi (strain ATCC BAA-1151 / DSM 17278 / SZ) (Geobacter lovleyi), this protein is Adenine phosphoribosyltransferase.